The following is a 275-amino-acid chain: Exosome complex component Rrp42 (275 aa).

Belongs to the RNase PH family. Rrp42 subfamily. Component of the archaeal exosome complex. Forms a hexameric ring-like arrangement composed of 3 Rrp41-Rrp42 heterodimers. The hexameric ring associates with a trimer of Rrp4 and/or Csl4 subunits.

It localises to the cytoplasm. Non-catalytic component of the exosome, which is a complex involved in RNA degradation. Contributes to the structuring of the Rrp41 active site. This chain is Exosome complex component Rrp42, found in Saccharolobus solfataricus (strain ATCC 35092 / DSM 1617 / JCM 11322 / P2) (Sulfolobus solfataricus).